We begin with the raw amino-acid sequence, 112 residues long: CLAVATA3/ESR (CLE)-related protein 44 (112 aa).

Residues 1-39 (MATTIDQTSIKSLHFHQVIRLIITIIFLAFLFLIGPTSS) form the signal peptide. Positions 41–112 (NHHLHESSSK…VPSGPNPISN (72 aa)) are disordered. The span at 62–71 (QPSTPSSSTM) shows a compositional bias: polar residues. A hydroxyproline mark is found at proline 104 and proline 107. Proline 107 is a glycosylation site (O-linked (Ara...) hydroxyproline).

This sequence belongs to the CLV3/ESR signal peptide family. As to quaternary structure, interacts specifically with the leucine-rich repeat receptor-like protein kinase TDR, especially in the presence of SERK2. The O-glycosylation (arabinosylation) of the hydroxyproline Pro-107 enhances binding affinity of the CLE44p peptide for its receptor. In terms of tissue distribution, mostly expressed in flowers and leaves. Widely expressed along the vascular strands. In roots and hypocotyls, present in endodermal cells as well as cells in the phloem and the adjacent pericycle.

The protein resides in the secreted. It is found in the extracellular space. In terms of biological role, extracellular signal peptide that regulates cell fate. May act with TDR as a ligand-receptor pair in a signal transduction pathway that represses tracheary element differentiation but promotes the formation of procambial cells adjacent to phloem cells in the veins. Regulates the transition of protophloem cells from proliferation to differentiation, thus impinging on postembryonic growth capacity of the root meristem; this signaling pathway requires CRN and CLV2. The chain is CLAVATA3/ESR (CLE)-related protein 44 from Arabidopsis thaliana (Mouse-ear cress).